We begin with the raw amino-acid sequence, 409 residues long: Arginine deiminase (409 aa).

The active-site Amidino-cysteine intermediate is the Cys-397.

This sequence belongs to the arginine deiminase family.

The protein resides in the cytoplasm. The catalysed reaction is L-arginine + H2O = L-citrulline + NH4(+). It participates in amino-acid degradation; L-arginine degradation via ADI pathway; carbamoyl phosphate from L-arginine: step 1/2. The protein is Arginine deiminase (arcA) of Metamycoplasma hominis (Mycoplasma hominis).